The sequence spans 668 residues: Myb-like protein W (668 aa).

Disordered stretches follow at residues 57–124 (LDQF…NESV), 246–357 (EKEK…EEEV), 403–432 (KPKS…TDKG), 497–546 (YTNT…NKER), 561–583 (SMGR…TTTS), and 631–668 (QCEE…DEII). Low complexity predominate over residues 69 to 121 (NNNNNNNSNNNNNNNNNNNNNNNNNNNNNNNNNNNNNNNNNNYNNYNNNNNNN). Over residues 246–268 (EKEKRKKEREEREEREKQEKQEQ) the composition is skewed to basic and acidic residues. The segment covering 293–307 (NNKDNNHNGYYYYYD) has biased composition (low complexity). The span at 308-318 (NDNDNYNDGDD) shows a compositional bias: acidic residues. A compositionally biased stretch (basic and acidic residues) spans 319–335 (EKEKEKEKEKEKEKENE). Residues 344 to 398 (TSMVNSEEWTEEEVNKMNEIRGKLSTADYNYWDKVSAHVKSKTAEQCQRKYNSRF) form the Myb-like domain. Residues 501–542 (NNNNNNNNNNNNNNNNNNNNNNNNNNNNNNNNNNNNNNNNNN) show a composition bias toward low complexity. Over residues 632–641 (CEERKKKEDR) the composition is skewed to basic and acidic residues. The segment covering 642-651 (DVDEDGEDDY) has biased composition (acidic residues).

The protein is Myb-like protein W (mybW) of Dictyostelium discoideum (Social amoeba).